A 156-amino-acid polypeptide reads, in one-letter code: Small ribosomal subunit protein uS7 (156 aa).

The protein belongs to the universal ribosomal protein uS7 family. Part of the 30S ribosomal subunit. Contacts proteins S9 and S11.

Functionally, one of the primary rRNA binding proteins, it binds directly to 16S rRNA where it nucleates assembly of the head domain of the 30S subunit. Is located at the subunit interface close to the decoding center, probably blocks exit of the E-site tRNA. This Rhizobium johnstonii (strain DSM 114642 / LMG 32736 / 3841) (Rhizobium leguminosarum bv. viciae) protein is Small ribosomal subunit protein uS7.